A 309-amino-acid polypeptide reads, in one-letter code: Protein FdhE homolog (309 aa).

The disordered stretch occupies residues 1 to 22 (MSIRIVPQEQLEQNGKSTPEGH).

This sequence belongs to the FdhE family.

The protein localises to the cytoplasm. In terms of biological role, necessary for formate dehydrogenase activity. This chain is Protein FdhE homolog, found in Pectobacterium carotovorum subsp. carotovorum (strain PC1).